Reading from the N-terminus, the 431-residue chain is Enolase (431 aa).

Gln-167 is a (2R)-2-phosphoglycerate binding site. Glu-209 serves as the catalytic Proton donor. The Mg(2+) site is built by Asp-246, Glu-289, and Asp-316. (2R)-2-phosphoglycerate is bound by residues Lys-341, Arg-370, Ser-371, and Lys-392. Lys-341 functions as the Proton acceptor in the catalytic mechanism.

The protein belongs to the enolase family. As to quaternary structure, component of the RNA degradosome, a multiprotein complex involved in RNA processing and mRNA degradation. The cofactor is Mg(2+).

Its subcellular location is the cytoplasm. The protein localises to the secreted. It is found in the cell surface. It catalyses the reaction (2R)-2-phosphoglycerate = phosphoenolpyruvate + H2O. It participates in carbohydrate degradation; glycolysis; pyruvate from D-glyceraldehyde 3-phosphate: step 4/5. Catalyzes the reversible conversion of 2-phosphoglycerate (2-PG) into phosphoenolpyruvate (PEP). It is essential for the degradation of carbohydrates via glycolysis. This Shewanella oneidensis (strain ATCC 700550 / JCM 31522 / CIP 106686 / LMG 19005 / NCIMB 14063 / MR-1) protein is Enolase.